Reading from the N-terminus, the 288-residue chain is RELT-like protein 1 (288 aa).

The N-terminal stretch at M1 to L23 is a signal peptide. Topologically, residues G24 to E57 are extracellular. N-linked (GlcNAc...) asparagine glycosylation occurs at N25. A helical membrane pass occupies residues Y58–C78. The Cytoplasmic segment spans residues H79 to E288. Disordered regions lie at residues F145–S172 and H237–E288. A compositionally biased stretch (low complexity) spans S152–S172. Over residues H237–S246 the composition is skewed to basic and acidic residues.

This sequence belongs to the RELT family.

It is found in the cell membrane. This is RELT-like protein 1 (RELL1) from Gallus gallus (Chicken).